Reading from the N-terminus, the 290-residue chain is 4-hydroxy-tetrahydrodipicolinate synthase (290 aa).

Position 44 (Thr-44) interacts with pyruvate. Tyr-132 (proton donor/acceptor) is an active-site residue. The active-site Schiff-base intermediate with substrate is Lys-160. Residue Ile-202 participates in pyruvate binding.

Belongs to the DapA family. In terms of assembly, homotetramer; dimer of dimers.

Its subcellular location is the cytoplasm. The catalysed reaction is L-aspartate 4-semialdehyde + pyruvate = (2S,4S)-4-hydroxy-2,3,4,5-tetrahydrodipicolinate + H2O + H(+). Its pathway is amino-acid biosynthesis; L-lysine biosynthesis via DAP pathway; (S)-tetrahydrodipicolinate from L-aspartate: step 3/4. Functionally, catalyzes the condensation of (S)-aspartate-beta-semialdehyde [(S)-ASA] and pyruvate to 4-hydroxy-tetrahydrodipicolinate (HTPA). This is 4-hydroxy-tetrahydrodipicolinate synthase from Legionella pneumophila subsp. pneumophila (strain Philadelphia 1 / ATCC 33152 / DSM 7513).